A 145-amino-acid polypeptide reads, in one-letter code: Superoxide dismutase [Mn/Fe] (145 aa).

H10 and H64 together coordinate Fe(3+). 2 residues coordinate Mn(2+): H10 and H64.

This sequence belongs to the iron/manganese superoxide dismutase family. The cofactor is Mn(2+). Fe(3+) serves as cofactor.

It catalyses the reaction 2 superoxide + 2 H(+) = H2O2 + O2. Functionally, destroys superoxide anion radicals which are normally produced within the cells and which are toxic to biological systems. Catalyzes the dismutation of superoxide anion radicals into O2 and H2O2 by successive reduction and oxidation of the transition metal ion at the active site. This is Superoxide dismutase [Mn/Fe] (sodA) from Streptococcus porcinus.